A 398-amino-acid polypeptide reads, in one-letter code: Phosphoglycerate kinase (398 aa).

Residues 24 to 26 (DFN), Arg-40, 63 to 66 (HMGR), Arg-122, and Arg-155 contribute to the substrate site. ATP contacts are provided by residues Lys-206, Gly-294, Glu-325, and 354–357 (GGDS).

Belongs to the phosphoglycerate kinase family. In terms of assembly, monomer.

It localises to the cytoplasm. The catalysed reaction is (2R)-3-phosphoglycerate + ATP = (2R)-3-phospho-glyceroyl phosphate + ADP. Its pathway is carbohydrate degradation; glycolysis; pyruvate from D-glyceraldehyde 3-phosphate: step 2/5. The sequence is that of Phosphoglycerate kinase from Picosynechococcus sp. (strain ATCC 27264 / PCC 7002 / PR-6) (Agmenellum quadruplicatum).